The primary structure comprises 845 residues: Krueppel homolog 1 (845 aa).

Residues Gln-141–Gln-164 form a disordered region. 8 consecutive C2H2-type zinc fingers follow at residues Phe-194–His-216, Tyr-271–His-293, Phe-299–His-321, Tyr-327–His-349, His-355–His-377, Tyr-383–His-407, Tyr-413–His-435, and Tyr-441–His-463. 2 disordered regions span residues Asp-469 to Gln-610 and Gly-757 to Ser-845. Composition is skewed to low complexity over residues Ala-474 to Ser-491, Ser-498 to Pro-508, and Ala-532 to Ala-559. Positions Ser-582–His-591 are enriched in polar residues. The segment covering Arg-759–Ser-775 has biased composition (low complexity). Basic and acidic residues predominate over residues Asn-796–Ser-809. The span at Gly-810–Gly-823 shows a compositional bias: low complexity.

It belongs to the krueppel C2H2-type zinc-finger protein family.

In terms of biological role, plays a general role in the hierarchies of gene expression leading to metamorphosis. The sequence is that of Krueppel homolog 1 (Kr-h1) from Drosophila melanogaster (Fruit fly).